Consider the following 134-residue polypeptide: MSEQEVLQKNNSPEGKEDRIIGKHVFGNLYDIDAERLNDKEFLEKLVLEAVNIAHMKLVEIKAWSFGGKKGGVSVIALVEESHIALHTWNEYNYATLDVYTCGEDSDPQSAFAHIVNALNPKRYQMFYADRSSQ.

The Schiff-base intermediate with substrate; via pyruvic acid role is filled by Ser-82. Ser-82 bears the Pyruvic acid (Ser); by autocatalysis mark. The Proton acceptor; for processing activity role is filled by His-87. Catalysis depends on Cys-102, which acts as the Proton donor; for catalytic activity.

Belongs to the prokaryotic AdoMetDC family. Type 1 subfamily. Heterooctamer of four alpha and four beta chains arranged as a tetramer of alpha/beta heterodimers. Requires pyruvate as cofactor. Post-translationally, is synthesized initially as an inactive proenzyme. Formation of the active enzyme involves a self-maturation process in which the active site pyruvoyl group is generated from an internal serine residue via an autocatalytic post-translational modification. Two non-identical subunits are generated from the proenzyme in this reaction, and the pyruvate is formed at the N-terminus of the alpha chain, which is derived from the carboxyl end of the proenzyme. The post-translation cleavage follows an unusual pathway, termed non-hydrolytic serinolysis, in which the side chain hydroxyl group of the serine supplies its oxygen atom to form the C-terminus of the beta chain, while the remainder of the serine residue undergoes an oxidative deamination to produce ammonia and the pyruvoyl group blocking the N-terminus of the alpha chain.

The enzyme catalyses L-arginine + H(+) = agmatine + CO2. Its pathway is amine and polyamine biosynthesis; agmatine biosynthesis; agmatine from L-arginine: step 1/1. In terms of biological role, specifically catalyzes the decarboxylation of L-arginine to agmatine. Has no S-adenosylmethionine decarboxylase (AdoMetDC) activity. The protein is Arginine decarboxylase proenzyme of Saccharolobus islandicus (strain M.16.4 / Kamchatka #3) (Sulfolobus islandicus).